A 119-amino-acid chain; its full sequence is Beta-2-microglobulin (119 aa).

The N-terminal stretch at 1–20 (MARSVVAALLVLLSLSGLEA) is a signal peptide. One can recognise an Ig-like C1-type domain in the interval 25 to 114 (PKIQVYSRHP…VTFPTPKTVK (90 aa)). Cys-45 and Cys-100 are joined by a disulfide.

It belongs to the beta-2-microglobulin family. In terms of assembly, heterodimer of an alpha chain and a beta chain. Beta-2-microglobulin is the beta-chain of major histocompatibility complex class I molecules.

The protein localises to the secreted. Its function is as follows. Component of the class I major histocompatibility complex (MHC). Involved in the presentation of peptide antigens to the immune system. This chain is Beta-2-microglobulin (B2M), found in Saimiri boliviensis boliviensis (Bolivian squirrel monkey).